Reading from the N-terminus, the 331-residue chain is DNA-directed RNA polymerase subunit alpha (331 aa).

Positions 1 to 242 (MEKFLRYNIQ…EHYKPIVTEL (242 aa)) are alpha N-terminal domain (alpha-NTD). The segment at 258–331 (VSSSKSSLAI…RNLKLKEEQN (74 aa)) is alpha C-terminal domain (alpha-CTD).

Belongs to the RNA polymerase alpha chain family. As to quaternary structure, homodimer. The RNAP catalytic core consists of 2 alpha, 1 beta, 1 beta' and 1 omega subunit. When a sigma factor is associated with the core the holoenzyme is formed, which can initiate transcription.

It catalyses the reaction RNA(n) + a ribonucleoside 5'-triphosphate = RNA(n+1) + diphosphate. Functionally, DNA-dependent RNA polymerase catalyzes the transcription of DNA into RNA using the four ribonucleoside triphosphates as substrates. This is DNA-directed RNA polymerase subunit alpha from Malacoplasma penetrans (strain HF-2) (Mycoplasma penetrans).